The primary structure comprises 122 residues: Pupal cuticle protein Edg-78E (122 aa).

Positions 1 to 16 are cleaved as a signal peptide; it reads MYKYLFCLALIGCACA. The Chitin-binding type R&amp;R domain maps to 36-96; the sequence is EGNYQYAYET…PVGDHLPTPP (61 aa).

In terms of tissue distribution, imaginal (anterior) epidermis.

Component of the cuticle of the pupa of fruit fly. This Drosophila melanogaster (Fruit fly) protein is Pupal cuticle protein Edg-78E (Edg78E).